The primary structure comprises 78 residues: MKNKREKMRPKSSTILILLMSVLILLLSIDILANHIIIKVDGYYYDGLGQKLAMKDVIPINASFNKIKSQLEKSMKFH.

Residues 13-33 (STILILLMSVLILLLSIDILA) form a helical membrane-spanning segment.

Its subcellular location is the membrane. This is an uncharacterized protein from Methanocaldococcus jannaschii (strain ATCC 43067 / DSM 2661 / JAL-1 / JCM 10045 / NBRC 100440) (Methanococcus jannaschii).